The chain runs to 355 residues: UDP-N-acetylglucosamine--N-acetylmuramyl-(pentapeptide) pyrophosphoryl-undecaprenol N-acetylglucosamine transferase (355 aa).

Residues 15–17 (TGG), Asn-127, Arg-163, Ser-191, Ile-244, 263–268 (ALTVSE), and Gln-288 each bind UDP-N-acetyl-alpha-D-glucosamine.

Belongs to the glycosyltransferase 28 family. MurG subfamily.

It localises to the cell inner membrane. It catalyses the reaction di-trans,octa-cis-undecaprenyl diphospho-N-acetyl-alpha-D-muramoyl-L-alanyl-D-glutamyl-meso-2,6-diaminopimeloyl-D-alanyl-D-alanine + UDP-N-acetyl-alpha-D-glucosamine = di-trans,octa-cis-undecaprenyl diphospho-[N-acetyl-alpha-D-glucosaminyl-(1-&gt;4)]-N-acetyl-alpha-D-muramoyl-L-alanyl-D-glutamyl-meso-2,6-diaminopimeloyl-D-alanyl-D-alanine + UDP + H(+). It participates in cell wall biogenesis; peptidoglycan biosynthesis. Functionally, cell wall formation. Catalyzes the transfer of a GlcNAc subunit on undecaprenyl-pyrophosphoryl-MurNAc-pentapeptide (lipid intermediate I) to form undecaprenyl-pyrophosphoryl-MurNAc-(pentapeptide)GlcNAc (lipid intermediate II). The sequence is that of UDP-N-acetylglucosamine--N-acetylmuramyl-(pentapeptide) pyrophosphoryl-undecaprenol N-acetylglucosamine transferase from Salmonella arizonae (strain ATCC BAA-731 / CDC346-86 / RSK2980).